Consider the following 263-residue polypeptide: Complement control protein C3 (263 aa).

The first 19 residues, 1 to 19 (MKVESVTFLTLLGIGCVLS), serve as a signal peptide directing secretion. 4 Sushi domains span residues 20 to 83 (CCTI…QCIK), 84 to 145 (RRCP…ICES), 146 to 203 (VKCQ…TCQI), and 204 to 263 (VKCP…KCVR). Intrachain disulfides connect cysteine 21–cysteine 70, cysteine 54–cysteine 81, cysteine 86–cysteine 126, cysteine 112–cysteine 143, cysteine 148–cysteine 190, cysteine 176–cysteine 201, cysteine 206–cysteine 248, and cysteine 234–cysteine 261.

The protein belongs to the receptors of complement activation (RCA) family. Heterodimer with A56 protein; disulfide-linked.

The protein localises to the virion membrane. It localises to the host cell membrane. Its subcellular location is the secreted. Serves to protect the virus against complement attack by inhibiting both classical and alternative pathways of complement activation. Binds C3b and C4b. The polypeptide is Complement control protein C3 (Vaccinia virus (strain Copenhagen) (VACV)).